Reading from the N-terminus, the 532-residue chain is MASERDPLLPVHGEGPESPSRRNWKTWIKHGILLILVLSTVIFFYFFSSHKSKGTNEKPKFVIMMVSDGMGPGSLSMTRSFVETLNDKEGYRLPLDEHLIGSSRTRSSSSLITDSAAGATAFSCANKTYNGAVGVLDNEKPCGTILEAAKEAGYLTGIVVTSRVTDATPASFSAHAANRFMQDLIAEYQVGMGPLGRSVDLLFGGGLCSFLPKSTYRSCRSDNLDLLKYARKKEGFQILLNRTDFDELSNAQLPLLGLFSDYHLSYDIDYQPEVQPKLSEMVETALDVLLNATNEDTSKGFFLLIEGSRIDMASHNNDPIAHVYEVMEYNRAFEIASAFVEKNGGSLISTSDHETGGLTVGRQVSKKYPEYLWKPQVLSLALHSIEYLASAIVNHNQNTLLPYIEQFVLPAIGIPDPNPKQIHDIYVARHNIFNLINVLSDIVSVEAQIGWTTHGHTAVDVNVYGVGEVTEHLRGNMENIEIGQFMEIYLNVSLSDVTEKLKDAPIHGAPDRPSLVETSFSDRLVGFGADLF.

Positions 1–20 (MASERDPLLPVHGEGPESPS) are disordered. A helical; Signal-anchor for type II membrane protein membrane pass occupies residues 27–47 (WIKHGILLILVLSTVIFFYFF). D68 lines the Mg(2+) pocket. D68 contributes to the Zn(2+) binding site. Residue S115 is the Phosphoserine intermediate of the active site. Mg(2+)-binding residues include D166, T168, and E306. Positions 311, 315, 352, 353, and 456 each coordinate Zn(2+).

This sequence belongs to the alkaline phosphatase family. It depends on Mg(2+) as a cofactor. Zn(2+) serves as cofactor.

It is found in the membrane. The enzyme catalyses a phosphate monoester + H2O = an alcohol + phosphate. This chain is Alkaline phosphatase, found in Schizosaccharomyces pombe (strain 972 / ATCC 24843) (Fission yeast).